Reading from the N-terminus, the 143-residue chain is Ribosome-binding factor A (143 aa).

The tract at residues 119–143 (KAKQQQFTPDTPDNSESVDGEKEQD) is disordered. The segment covering 122–133 (QQQFTPDTPDNS) has biased composition (polar residues).

It belongs to the RbfA family. As to quaternary structure, monomer. Binds 30S ribosomal subunits, but not 50S ribosomal subunits or 70S ribosomes.

The protein resides in the cytoplasm. Its function is as follows. One of several proteins that assist in the late maturation steps of the functional core of the 30S ribosomal subunit. Associates with free 30S ribosomal subunits (but not with 30S subunits that are part of 70S ribosomes or polysomes). Required for efficient processing of 16S rRNA. May interact with the 5'-terminal helix region of 16S rRNA. This is Ribosome-binding factor A from Shewanella frigidimarina (strain NCIMB 400).